The chain runs to 680 residues: DNA-directed RNA polymerase subunit beta' (680 aa).

Zn(2+) contacts are provided by Cys-69, Cys-71, Cys-87, and Cys-90. The Mg(2+) site is built by Asp-489, Asp-491, and Asp-493.

This sequence belongs to the RNA polymerase beta' chain family. RpoC1 subfamily. In plastids the minimal PEP RNA polymerase catalytic core is composed of four subunits: alpha, beta, beta', and beta''. When a (nuclear-encoded) sigma factor is associated with the core the holoenzyme is formed, which can initiate transcription. It depends on Mg(2+) as a cofactor. Zn(2+) serves as cofactor.

It localises to the plastid. The protein localises to the chloroplast. The catalysed reaction is RNA(n) + a ribonucleoside 5'-triphosphate = RNA(n+1) + diphosphate. Functionally, DNA-dependent RNA polymerase catalyzes the transcription of DNA into RNA using the four ribonucleoside triphosphates as substrates. This Aethionema cordifolium (Lebanon stonecress) protein is DNA-directed RNA polymerase subunit beta'.